The chain runs to 619 residues: Putative zinc metalloprotease CT_072 (619 aa).

Histidine 20 is a Zn(2+) binding site. Glutamate 21 is a catalytic residue. Histidine 24 is a binding site for Zn(2+). 3 consecutive transmembrane segments (helical) span residues 103-125 (IFVL…GILY), 558-580 (VLNL…WEIL), and 593-610 (ALVP…FLTL).

This sequence belongs to the peptidase M50B family. The cofactor is Zn(2+).

Its subcellular location is the cell inner membrane. The chain is Putative zinc metalloprotease CT_072 from Chlamydia trachomatis serovar D (strain ATCC VR-885 / DSM 19411 / UW-3/Cx).